Reading from the N-terminus, the 678-residue chain is Transcriptional regulator CRZ1 (678 aa).

The span at 1-21 shows a compositional bias: polar residues; that stretch reads MSFSNGNMASYMTSSNGEEQS. 2 disordered regions span residues 1–50 and 159–195; these read MSFS…SHTF and TPAD…NYSD. Residues 34-47 are compositionally biased toward low complexity; sequence YRRNNFRNSSNSGS. Over residues 166–195 the composition is skewed to polar residues; the sequence is RPSLTNQFLSPRSNYDGTTRSSGIDSNYSD. Residue Thr-170 is modified to Phosphothreonine. Ser-175, Ser-245, and Ser-385 each carry phosphoserine. A disordered region spans residues 401–486; it reads KLKKSRRRSS…SNFNEDNNNN (86 aa). Low complexity predominate over residues 410 to 428; that stretch reads SQTSNNSFTSRRSSRSRSI. 2 stretches are compositionally biased toward basic and acidic residues: residues 429–446 and 457–467; these read SPDE…KLLE and DNNRERYDNDS. The segment covering 472–486 has biased composition (low complexity); it reads NTINSSNFNEDNNNN. 2 C2H2-type zinc fingers span residues 569–591 and 597–619; these read FACD…LRTH and FICS…EDLH.

In terms of processing, phosphorylated. Dephosphorylated by calcineurin which leads to rapid translocation from the cytoplasm to the nucleus. Phosphorylated by the cyclin-CDK PHO80-PHO85.

The protein localises to the nucleus. It localises to the cytoplasm. Functionally, involved in the regulation of calcium ion homeostasis. Binds to the calcineurin-dependent response element. Transcriptionally regulates PMC1, PMR1, PMR2A and FKS2. In Saccharomyces cerevisiae (strain ATCC 204508 / S288c) (Baker's yeast), this protein is Transcriptional regulator CRZ1 (CRZ1).